The following is a 374-amino-acid chain: Probable tRNA pseudouridine synthase D (374 aa).

The Nucleophile role is filled by D81. The region spanning 141-340 (VFPNYFDVQR…RKGFQKMYDL (200 aa)) is the TRUD domain.

The protein belongs to the pseudouridine synthase TruD family.

It catalyses the reaction uridine(13) in tRNA = pseudouridine(13) in tRNA. Its function is as follows. Could be responsible for synthesis of pseudouridine from uracil-13 in transfer RNAs. This is Probable tRNA pseudouridine synthase D from Nanoarchaeum equitans (strain Kin4-M).